Reading from the N-terminus, the 124-residue chain is MADLNAIVEQLSGLTIMEAAELVKQLEEKWGVSAAAAPVMMAGGPAAAAAPVEEKTEFTVVLADAGANKINVIKEVRAITGLGLKEAKDLVEGAPKEVKAGVAKAEAEELKKKLEAAGAKVEVK.

It belongs to the bacterial ribosomal protein bL12 family. In terms of assembly, homodimer. Part of the ribosomal stalk of the 50S ribosomal subunit. Forms a multimeric L10(L12)X complex, where L10 forms an elongated spine to which 2 to 4 L12 dimers bind in a sequential fashion. Binds GTP-bound translation factors.

Forms part of the ribosomal stalk which helps the ribosome interact with GTP-bound translation factors. Is thus essential for accurate translation. The polypeptide is Large ribosomal subunit protein bL12 (Anaeromyxobacter dehalogenans (strain 2CP-C)).